Here is a 629-residue protein sequence, read N- to C-terminus: Chaperone protein DnaK (629 aa).

Residues 576–587 (QAYQQQQDAQAG) are compositionally biased toward low complexity. Residues 576–629 (QAYQQQQDAQAGAAGGAGGMGGMGGMADGPGGAADADGDDEEYVDADFEDVDEE) are disordered. Residues 588 to 607 (AAGGAGGMGGMGGMADGPGG) are compositionally biased toward gly residues. Residues 611-629 (ADGDDEEYVDADFEDVDEE) are compositionally biased toward acidic residues.

It belongs to the heat shock protein 70 family.

In terms of biological role, acts as a chaperone. The chain is Chaperone protein DnaK from Halobacterium salinarum (strain ATCC 29341 / DSM 671 / R1).